The following is a 124-amino-acid chain: Ragulator complex protein LAMTOR3 homolog (124 aa).

It belongs to the LAMTOR3 family. In terms of assembly, part of the Ragulator complex composed of Lamtor3, Lamtor2, CG14184, CG14812, and Lamtor4.

In terms of biological role, regulator of the TOR pathway, a signaling cascade that promotes cell growth in response to growth factors, energy levels, and amino acids. As part of the Ragulator complex, may activate the TOR signaling cascade in response to amino acids. This chain is Ragulator complex protein LAMTOR3 homolog, found in Drosophila melanogaster (Fruit fly).